The primary structure comprises 623 residues: UvrABC system protein C (623 aa).

In terms of domain architecture, GIY-YIG spans 28 to 105; sequence GAPGVYRMLD…IKQLKPKYNV (78 aa). Residues 215–250 enclose the UVR domain; it reads TRVQEELAEQMMAASEAMEFERAAALRDRIRALTTV.

The protein belongs to the UvrC family. Interacts with UvrB in an incision complex.

Its subcellular location is the cytoplasm. The UvrABC repair system catalyzes the recognition and processing of DNA lesions. UvrC both incises the 5' and 3' sides of the lesion. The N-terminal half is responsible for the 3' incision and the C-terminal half is responsible for the 5' incision. The protein is UvrABC system protein C of Ruegeria pomeroyi (strain ATCC 700808 / DSM 15171 / DSS-3) (Silicibacter pomeroyi).